Reading from the N-terminus, the 344-residue chain is Aromatic amino acid aminotransferase (344 aa).

Lys-213 carries the N6-(pyridoxal phosphate)lysine modification.

The protein belongs to the class-II pyridoxal-phosphate-dependent aminotransferase family. Homodimer. The cofactor is pyridoxal 5'-phosphate.

The enzyme catalyses an aromatic L-alpha-amino acid + 2-oxoglutarate = an aromatic oxo-acid + L-glutamate. In terms of biological role, aminotransferase that catalyzes the conversion of aromatic amino acids and 2-oxoglutarate into corresponding aromatic oxo acids and L-glutamate. The protein is Aromatic amino acid aminotransferase of Corynebacterium diphtheriae (strain ATCC 700971 / NCTC 13129 / Biotype gravis).